We begin with the raw amino-acid sequence, 218 residues long: Transmembrane gamma-carboxyglutamic acid protein 1 (218 aa).

Residues 1–20 (MGRVFLTGEKANSVLKRYPR) constitute a propeptide that is removed on maturation. The region spanning 20–66 (RANGFFEEIRQGNIERECKEEFCTFEEAREAFENNEKTKEFWSTYTK) is the Gla domain. The Extracellular segment spans residues 21-80 (ANGFFEEIRQGNIERECKEEFCTFEEAREAFENNEKTKEFWSTYTKAQQGESNRGSDWFQ). Cysteine 37 and cysteine 42 are disulfide-bonded. Residues 81–101 (FYLTFPLIFGLFIILLVIFLI) form a helical membrane-spanning segment. Residues 102–218 (WRCFLRNKTR…PMVPVVTTIK (117 aa)) lie on the Cytoplasmic side of the membrane. Residues 161-195 (TRLSNCDPPPTYEEATGQVNLQRSETEPHLDPPPE) are disordered.

In terms of processing, gla residues are produced after subsequent post-translational modifications of glutamate by a vitamin K-dependent gamma-carboxylase.

The protein localises to the membrane. In Pongo abelii (Sumatran orangutan), this protein is Transmembrane gamma-carboxyglutamic acid protein 1 (PRRG1).